The chain runs to 137 residues: Basic phospholipase A2 homolog Bsc-K49 (137 aa).

The signal sequence occupies residues 1 to 16 (MRTLWIVAVLLVGVEG). Intrachain disulfides connect cysteine 42–cysteine 131, cysteine 44–cysteine 60, cysteine 59–cysteine 111, cysteine 65–cysteine 137, cysteine 66–cysteine 104, cysteine 73–cysteine 97, and cysteine 91–cysteine 102. The tract at residues 121–133 (KNYKITMKMFCKK) is important for membrane-damaging activities in eukaryotes and bacteria; heparin-binding.

The protein belongs to the phospholipase A2 family. Group II subfamily. K49 sub-subfamily. In terms of assembly, homodimer; non-covalently linked. Expressed by the venom gland.

The protein localises to the secreted. In terms of biological role, snake venom phospholipase A2 that lacks enzymatic activity. Is myotoxic, and displays edema-inducing activities. A model of myotoxic mechanism has been proposed: an apo Lys49-PLA2 is activated by the entrance of a hydrophobic molecule (e.g. fatty acid) at the hydrophobic channel of the protein leading to a reorientation of a monomer. This reorientation causes a transition between 'inactive' to 'active' states, causing alignment of C-terminal and membrane-docking sites (MDoS) side-by-side and putting the membrane-disruption sites (MDiS) in the same plane, exposed to solvent and in a symmetric position for both monomers. The MDoS region stabilizes the toxin on membrane by the interaction of charged residues with phospholipid head groups. Subsequently, the MDiS region destabilizes the membrane with penetration of hydrophobic residues. This insertion causes a disorganization of the membrane, allowing an uncontrolled influx of ions (i.e. calcium and sodium), and eventually triggering irreversible intracellular alterations and cell death. The sequence is that of Basic phospholipase A2 homolog Bsc-K49 from Bothriechis schlegelii (Eyelash palm pitviper).